A 712-amino-acid chain; its full sequence is Phosphatase and actin regulator 4 (712 aa).

2 disordered regions span residues 1-22 and 90-405; these read MGQA…GQPT and RGLL…EVPK. An RPEL 1 repeat occupies 72-97; it reads EVLERKISMRKPREELVKRGLLLEDS. Polar residues predominate over residues 114–124; the sequence is NGHTTLIGSTR. 4 positions are modified to phosphoserine: Ser125, Ser127, Ser140, and Ser156. The span at 136-152 shows a compositional bias: basic and acidic residues; it reads ERIASLRKPVPEEEPKK. The span at 198–230 shows a compositional bias: low complexity; it reads ATSSGSLARPSSSASTTAITTAPAATMAATNPA. The span at 233–243 shows a compositional bias: polar residues; that stretch reads VHSSGPPSQAP. A compositionally biased stretch (low complexity) spans 245–267; sequence TLPAAPASTHTTATLSLTHTGPA. A phosphoserine mark is found at Ser282, Ser303, and Ser353. Residues 345-357 are compositionally biased toward low complexity; it reads SEPLLTPSSSPLP. Residues 358–371 are compositionally biased toward pro residues; the sequence is AHIPPEPPQSPPFP. Ser436 carries the phosphoserine modification. Position 441 is a phosphothreonine (Thr441). 7 positions are modified to phosphoserine: Ser452, Ser462, Ser473, Ser524, Ser526, Ser567, and Ser600. Residues 507-557 are disordered; that stretch reads VIPKLPQCLQEEEEGKESDSDSEGPIQYRDEEDEDESHHSALANKVKRKDT. Positions 516 to 528 are enriched in acidic residues; sequence QEEEEGKESDSDS. RPEL repeat units lie at residues 593–618 and 631–656; these read NTLI…QPKN and RRLT…RFNE. A disordered region spans residues 602 to 626; it reads RPTPEELEQRNILQPKNEADRQAEK. At Ser638 the chain carries Phosphoserine.

Belongs to the phosphatase and actin regulator family. Binds PPP1CA and actin.

It is found in the cytoplasm. The protein resides in the cell projection. It localises to the lamellipodium. Functionally, regulator of protein phosphatase 1 (PP1) required for neural tube and optic fissure closure, and enteric neural crest cell (ENCCs) migration during development. Acts as an activator of PP1 by interacting with PPP1CA and preventing phosphorylation of PPP1CA at 'Thr-320'. During neural tube closure, localizes to the ventral neural tube and activates PP1, leading to down-regulate cell proliferation within cranial neural tissue and the neural retina. Also acts as a regulator of migration of enteric neural crest cells (ENCCs) by activating PP1, leading to dephosphorylation and subsequent activation of cofilin (COF1 or COF2) and repression of the integrin signaling through the RHO/ROCK pathway. In Bos taurus (Bovine), this protein is Phosphatase and actin regulator 4 (PHACTR4).